The sequence spans 523 residues: Protein tweety homolog 3 (523 aa).

Over 1-42 (MAGVSYAAPWWVSLLHRLPHFDLSWEATSSQFRPEDTDYQQA) the chain is Extracellular. Residues 43–63 (LLLLGAAALACLALDLLFLLF) traverse the membrane as a helical segment. Over 64–86 (YSFWLCCRRRKSEEHLDADCCCT) the chain is Cytoplasmic. A helical membrane pass occupies residues 87 to 107 (AWCVIIATLVCSAGIAVGFYG). Residues 108-211 (NGETSDGIHR…VDLYDWYRWL (104 aa)) are Extracellular-facing. Ca(2+) is bound by residues Glu-110 and Asp-113. N-linked (GlcNAc...) asparagine glycans are attached at residues Asn-126 and Asn-144. A helical membrane pass occupies residues 212-232 (GYLGLLLLDVIICLLVLVGLI). At 233 to 236 (RSSK) the chain is on the cytoplasmic side. A helical membrane pass occupies residues 237-257 (GILVGVCLLGVLALVISWGAL). At 258-386 (GLELAVSVGS…LTGFCYDGVE (129 aa)) the chain is on the extracellular side. 2 disulfides stabilise this stretch: Cys-271-Cys-381 and Cys-299-Cys-366. Residue Asn-351 is glycosylated (N-linked (GlcNAc...) asparagine). A helical transmembrane segment spans residues 387 to 407 (GLIYLALFSFVTALMFSSIVC). Residues 408 to 523 (SVPHTWQQKR…QPRPDSSGSH (116 aa)) lie on the Cytoplasmic side of the membrane. Disordered stretches follow at residues 413–435 (WQQK…RQAH) and 482–523 (QNPR…SGSH). Ser-496 is modified (phosphoserine). A PY-motif; mediates interaction with NEDD4L motif is present at residues 498–501 (PPSY). Over residues 501–523 (YTSSMRAKYLATSQPRPDSSGSH) the composition is skewed to polar residues. Phosphoserine occurs at positions 504 and 522.

Belongs to the tweety family. In terms of assembly, homotetramer; disulfide-linked. Homodimer. Interacts with NEDD4L. Ubiquitinated by NEDD4L. Post-translationally, N-Glycosylated. Contains high-mannose, hybrid and complex oligosaccharides. In terms of tissue distribution, expressed in excitable tissues. Expressed in the brain, heart, skeletal muscle, colon, spleen, kidney and peripheral blood leukocytes.

The protein localises to the cell membrane. The enzyme catalyses chloride(in) = chloride(out). It carries out the reaction L-glutamate(out) = L-glutamate(in). Calcium-independent, swelling-dependent volume-regulated anion channel (VRAC-swell) which plays a pivotal role in the process of regulatory volume decrease (RVD) in the brain through the efflux of anions like chloride and organic osmolytes like glutamate. Probable large-conductance Ca(2+)-activated chloride channel. In Homo sapiens (Human), this protein is Protein tweety homolog 3 (TTYH3).